A 355-amino-acid polypeptide reads, in one-letter code: UDP-N-acetylglucosamine--N-acetylmuramyl-(pentapeptide) pyrophosphoryl-undecaprenol N-acetylglucosamine transferase (355 aa).

UDP-N-acetyl-alpha-D-glucosamine contacts are provided by residues 15–17 (TGG), N127, R163, S191, I244, 263–268 (ALTVSE), and Q288.

The protein belongs to the glycosyltransferase 28 family. MurG subfamily.

Its subcellular location is the cell inner membrane. The catalysed reaction is di-trans,octa-cis-undecaprenyl diphospho-N-acetyl-alpha-D-muramoyl-L-alanyl-D-glutamyl-meso-2,6-diaminopimeloyl-D-alanyl-D-alanine + UDP-N-acetyl-alpha-D-glucosamine = di-trans,octa-cis-undecaprenyl diphospho-[N-acetyl-alpha-D-glucosaminyl-(1-&gt;4)]-N-acetyl-alpha-D-muramoyl-L-alanyl-D-glutamyl-meso-2,6-diaminopimeloyl-D-alanyl-D-alanine + UDP + H(+). The protein operates within cell wall biogenesis; peptidoglycan biosynthesis. In terms of biological role, cell wall formation. Catalyzes the transfer of a GlcNAc subunit on undecaprenyl-pyrophosphoryl-MurNAc-pentapeptide (lipid intermediate I) to form undecaprenyl-pyrophosphoryl-MurNAc-(pentapeptide)GlcNAc (lipid intermediate II). This is UDP-N-acetylglucosamine--N-acetylmuramyl-(pentapeptide) pyrophosphoryl-undecaprenol N-acetylglucosamine transferase from Photorhabdus laumondii subsp. laumondii (strain DSM 15139 / CIP 105565 / TT01) (Photorhabdus luminescens subsp. laumondii).